The following is a 428-amino-acid chain: Trigger factor (428 aa).

A PPIase FKBP-type domain is found at 163 to 248 (GNIAVIDFKG…VKEIKVKELP (86 aa)).

It belongs to the FKBP-type PPIase family. Tig subfamily.

The protein localises to the cytoplasm. The catalysed reaction is [protein]-peptidylproline (omega=180) = [protein]-peptidylproline (omega=0). Functionally, involved in protein export. Acts as a chaperone by maintaining the newly synthesized protein in an open conformation. Functions as a peptidyl-prolyl cis-trans isomerase. This is Trigger factor from Clostridium perfringens (strain ATCC 13124 / DSM 756 / JCM 1290 / NCIMB 6125 / NCTC 8237 / Type A).